Reading from the N-terminus, the 127-residue chain is Large ribosomal subunit protein bL19 (127 aa).

It belongs to the bacterial ribosomal protein bL19 family.

This protein is located at the 30S-50S ribosomal subunit interface and may play a role in the structure and function of the aminoacyl-tRNA binding site. The chain is Large ribosomal subunit protein bL19 from Synechococcus sp. (strain JA-3-3Ab) (Cyanobacteria bacterium Yellowstone A-Prime).